The sequence spans 324 residues: Protoheme IX farnesyltransferase (324 aa).

Helical transmembrane passes span 31-51 (LIVL…RGEV), 53-73 (PVLA…ANTI), 104-124 (LVFA…CANL), 125-145 (LSAC…THWL), 153-173 (IVIG…AVTG), 181-201 (VLFA…AMLI), 222-242 (TAWQ…LLVY), 243-263 (PLHA…VVFI), and 285-305 (FSIL…LPLT).

It belongs to the UbiA prenyltransferase family. Protoheme IX farnesyltransferase subfamily.

The protein resides in the cell inner membrane. It catalyses the reaction heme b + (2E,6E)-farnesyl diphosphate + H2O = Fe(II)-heme o + diphosphate. The protein operates within porphyrin-containing compound metabolism; heme O biosynthesis; heme O from protoheme: step 1/1. Converts heme B (protoheme IX) to heme O by substitution of the vinyl group on carbon 2 of heme B porphyrin ring with a hydroxyethyl farnesyl side group. This Cyanothece sp. (strain PCC 7425 / ATCC 29141) protein is Protoheme IX farnesyltransferase.